A 1131-amino-acid chain; its full sequence is Protein DWARF 53 (1131 aa).

The region spanning Ala8–Pro181 is the Clp R domain. Repeat stretches follow at residues Leu12 to Leu85 and Val103 to Pro181. The tract at residues Asn511–Arg574 is disordered. A compositionally biased stretch (low complexity) spans Ser558–Ser569. The EAR 1 signature appears at Leu578–Leu582. The interval Lys588 to Val655 is disordered. The segment covering Gly597 to Asp609 has biased composition (polar residues). Basic and acidic residues predominate over residues Lys646–Val655. The EAR 2 motif lies at Leu799–Leu803. 2 disordered regions span residues Ile951–Arg970 and Phe976–Gly1002. The EAR 3 signature appears at Phe976 to Pro981. A compositionally biased stretch (acidic residues) spans Val982 to Asp993.

The protein belongs to the ClpA/ClpB family. As to quaternary structure, interacts with D3. Interacts with D14. The interaction with D14 is enhanced in the presence of strigolactones. The interaction with D14 occurs in the presence of (2'R) stereoisomers of strigolactones, but not (2'S) stereoisomers. Interacts with the TOPLESS-related proteins TPR1, TPR2 and TPR3. Interacts with SPL14/IPA1. Polyubiquitinated. Strigolactone, but not karrikin, triggers rapid SCF(D3)-dependent degradation via the proteasome. In terms of tissue distribution, expressed in the shoot bases of seedlings, young leaves, axillary buds and young panicles. Expressed in young roots vasculature, culms, internodes and nodes, preferentially in the parenchyma cells surrounding the xylem.

Its subcellular location is the nucleus. Its function is as follows. Repressor of strigolactones (SL) signaling. Subjected to a negative feedback control of SL signaling. Suppresses the transcriptional activation activity of SPL14/IPA1 in SL signaling. Acts with SPL14/IPA1 to mediate the SL-regulated tiller development. Subject to a negative feedback regulation by SPL14/IPA1, which binds to D53 promoter to repress D53 gene expression. In Oryza sativa subsp. japonica (Rice), this protein is Protein DWARF 53.